Reading from the N-terminus, the 356-residue chain is Thrombopoietin (356 aa).

The first 21 residues, 1-21, serve as a signal peptide directing secretion; the sequence is MELTDLLLAAMLLAVARLTLS. Intrachain disulfides connect Cys-28–Cys-172 and Cys-50–Cys-106. Asn-197, Asn-206, Asn-235, Asn-249, Asn-256, Asn-336, and Asn-351 each carry an N-linked (GlcNAc...) asparagine glycan. Residues 291 to 356 are disordered; it reads GGLPPSPSLA…PHPRNLSQET (66 aa). Polar residues predominate over residues 330–339; that stretch reads PSTTMPNSTA.

This sequence belongs to the EPO/TPO family. Found mainly in the liver, kidney and skeletal muscle.

It localises to the secreted. Functionally, lineage-specific cytokine affecting the proliferation and maturation of megakaryocytes from their committed progenitor cells. It acts at a late stage of megakaryocyte development. It may be the major physiological regulator of circulating platelets. This Mus musculus (Mouse) protein is Thrombopoietin (Thpo).